A 285-amino-acid chain; its full sequence is Shikimate dehydrogenase (NADP(+)) (285 aa).

Shikimate-binding positions include 20–22 (SRS) and T67. Catalysis depends on K71, which acts as the Proton acceptor. Shikimate contacts are provided by N93 and D108. NADP(+) is bound by residues 132 to 136 (GAGGA) and M224. Y226 lines the shikimate pocket. G248 contacts NADP(+).

The protein belongs to the shikimate dehydrogenase family. Homodimer.

It catalyses the reaction shikimate + NADP(+) = 3-dehydroshikimate + NADPH + H(+). Its pathway is metabolic intermediate biosynthesis; chorismate biosynthesis; chorismate from D-erythrose 4-phosphate and phosphoenolpyruvate: step 4/7. Functionally, involved in the biosynthesis of the chorismate, which leads to the biosynthesis of aromatic amino acids. Catalyzes the reversible NADPH linked reduction of 3-dehydroshikimate (DHSA) to yield shikimate (SA). The polypeptide is Shikimate dehydrogenase (NADP(+)) (Bordetella avium (strain 197N)).